Reading from the N-terminus, the 138-residue chain is Acidic phospholipase A2 Cvv-E6h (138 aa).

Residues 1 to 16 (MRTLWIVAVLLLGVEG) form the signal peptide. Disulfide bonds link cysteine 42–cysteine 131, cysteine 44–cysteine 60, cysteine 59–cysteine 111, cysteine 65–cysteine 138, cysteine 66–cysteine 104, cysteine 73–cysteine 97, and cysteine 91–cysteine 102. Positions 43, 45, and 47 each coordinate Ca(2+). Histidine 63 is a catalytic residue. Residue aspartate 64 coordinates Ca(2+). The active site involves aspartate 105.

The protein belongs to the phospholipase A2 family. Group II subfamily. D49 sub-subfamily. Requires Ca(2+) as cofactor. As to expression, expressed by the venom gland.

It is found in the secreted. It carries out the reaction a 1,2-diacyl-sn-glycero-3-phosphocholine + H2O = a 1-acyl-sn-glycero-3-phosphocholine + a fatty acid + H(+). In terms of biological role, snake venom phospholipase A2 (PLA2) that shows very low inhibition of ADP-induced platelet aggregation in platelet-rich plasma of human, rabbit and guinea pig. In vivo, shows efficient edema-inducing activities in rat paws. PLA2 catalyzes the calcium-dependent hydrolysis of the 2-acyl groups in 3-sn-phosphoglycerides. This Crotalus viridis viridis (Prairie rattlesnake) protein is Acidic phospholipase A2 Cvv-E6h.